Consider the following 149-residue polypeptide: Transcriptional repressor NrdR (149 aa).

A zinc finger lies at 3-34; it reads CPFCTAVDTKVIDSRLVGDGSQVRRRRQCLVC. In terms of domain architecture, ATP-cone spans 49 to 139; sequence PRVVKSDEIR…VYRSFEDVRD (91 aa).

The protein belongs to the NrdR family. It depends on Zn(2+) as a cofactor.

Negatively regulates transcription of bacterial ribonucleotide reductase nrd genes and operons by binding to NrdR-boxes. The protein is Transcriptional repressor NrdR of Proteus mirabilis (strain HI4320).